The following is a 36-amino-acid chain: Pancreatic polypeptide (36 aa).

Tyr-36 is modified (tyrosine amide).

Belongs to the NPY family.

It is found in the secreted. Hormone secreted by pancreatic cells that acts as a regulator of pancreatic and gastrointestinal functions probably by signaling through the G protein-coupled receptor NPY4R2. The protein is Pancreatic polypeptide (PPY) of Macaca mulatta (Rhesus macaque).